We begin with the raw amino-acid sequence, 210 residues long: Protein LURP-one-related 5 (210 aa).

The protein belongs to the LOR family.

Its function is as follows. Might be related to the phospholipid scramblase and tubby-like superfamily of membrane tethered transcription factors. The polypeptide is Protein LURP-one-related 5 (Arabidopsis thaliana (Mouse-ear cress)).